Here is a 461-residue protein sequence, read N- to C-terminus: Photosystem II CP43 reaction center protein (461 aa).

Residues 1-2 constitute a propeptide that is removed on maturation; the sequence is ME. Thr-3 carries the post-translational modification N-acetylthreonine. The residue at position 3 (Thr-3) is a Phosphothreonine. The next 5 helical transmembrane spans lie at 57–81, 122–143, 166–188, 243–263, and 279–300; these read LFEV…PHLA, LIGP…KDKN, KAMY…RIIT, TPWP…LSYS, and WFNN…ASQS. A [CaMn4O5] cluster-binding site is contributed by Glu-355. Residues 435-459 traverse the membrane as a helical segment; it reads RARAAAAGFEKGIDRLDEPVLSMRP.

It belongs to the PsbB/PsbC family. PsbC subfamily. In terms of assembly, PSII is composed of 1 copy each of membrane proteins PsbA, PsbB, PsbC, PsbD, PsbE, PsbF, PsbH, PsbI, PsbJ, PsbK, PsbL, PsbM, PsbT, PsbX, PsbY, PsbZ, Psb30/Ycf12, at least 3 peripheral proteins of the oxygen-evolving complex and a large number of cofactors. It forms dimeric complexes. The cofactor is Binds multiple chlorophylls and provides some of the ligands for the Ca-4Mn-5O cluster of the oxygen-evolving complex. It may also provide a ligand for a Cl- that is required for oxygen evolution. PSII binds additional chlorophylls, carotenoids and specific lipids..

Its subcellular location is the plastid. The protein resides in the chloroplast thylakoid membrane. In terms of biological role, one of the components of the core complex of photosystem II (PSII). It binds chlorophyll and helps catalyze the primary light-induced photochemical processes of PSII. PSII is a light-driven water:plastoquinone oxidoreductase, using light energy to abstract electrons from H(2)O, generating O(2) and a proton gradient subsequently used for ATP formation. In Tetradesmus obliquus (Green alga), this protein is Photosystem II CP43 reaction center protein.